A 316-amino-acid chain; its full sequence is MSKRKVAIIGSGNIGTDLMIKILRHGQHLEMAVMVGIDPQSDGLARARRMGVATTHEGVIGLMNMPEFADIDIVFDATSAGAHVKNDAALREAKPDIRLIDLTPAAIGPYCVPVVNLEENVDQLNVNMVTCGGQATIPMVAAVSRVARVHYAEIIASIASKSAGPGTRANIDEFTETTSRAIEVVGGAAKGKAIIVLNPAEPPLMMRDTVYVLSDEASQDDIEASINEMAEAVQAYVPGYRLKQRVQFEVIPQDKPVNLPGVGQFSGLKTAVWLEVEGAAHYLSAYAGNLDIMTSSALATAEKMAQSLARKAGEAA.

11 to 14 (SGNI) serves as a coordination point for NAD(+). Cysteine 131 functions as the Acyl-thioester intermediate in the catalytic mechanism. NAD(+) is bound by residues 162–170 (SAGPGTRAN) and asparagine 289.

It belongs to the acetaldehyde dehydrogenase family. Interacts with MhpE.

The catalysed reaction is acetaldehyde + NAD(+) + CoA = acetyl-CoA + NADH + H(+). It functions in the pathway aromatic compound metabolism; 3-phenylpropanoate degradation. Its function is as follows. Catalyzes the conversion of acetaldehyde to acetyl-CoA, using NAD(+) and coenzyme A. Is the final enzyme in the meta-cleavage pathway for the degradation of aromatic compounds. The polypeptide is Acetaldehyde dehydrogenase (Escherichia coli O81 (strain ED1a)).